Reading from the N-terminus, the 613-residue chain is Epsin-2 (613 aa).

The ENTH domain occupies 11–143 (NMMKGYSSTQ…NDEERLREER (133 aa)). Disordered stretches follow at residues 140–208 (REER…DDED), 323–351 (TAAN…PFSM), and 356–375 (RQKQ…EARQ). Residues 148–167 (RNRRANRAARPRPRRQRTRS) show a composition bias toward basic residues. T165 is modified (phosphothreonine). S167 is subject to Phosphoserine. 2 consecutive UIM domains span residues 175–194 (SYQD…AQED) and 206–225 (DEDP…EELK). Residues 179-188 (DLEKALEESR) are compositionally biased toward basic and acidic residues. A compositionally biased stretch (low complexity) spans 323–339 (TAANMQQQQQQPADFQQ). Residues 340 to 350 (PLPTGSNNPFS) show a composition bias toward polar residues. K426 participates in a covalent cross-link: Glycyl lysine isopeptide (Lys-Gly) (interchain with G-Cter in ubiquitin). T430 is modified (phosphothreonine). Phosphoserine is present on S434. 3 positions are modified to phosphothreonine: T450, T468, and T470. Positions 471 to 512 (GTFINSQGTGYKQVTNEPKNNPFLSNQYTGLPSTNIVPTQTG) are enriched in polar residues. A disordered region spans residues 471–613 (GTFINSQGTG…PDQGVSLIDL (143 aa)). The span at 526–600 (SPQQNPTGIS…QQQQQQQQQQ (75 aa)) shows a compositional bias: low complexity.

This sequence belongs to the epsin family. In terms of processing, phosphorylated by PRK1.

It is found in the cytoplasm. The protein resides in the membrane. Functionally, binds to membranes enriched in phosphatidylinositol 3,5-bisphosphate (PtdIns(3,5)P2) and phosphatidylinositol 4,5-bisphosphate (PtdIns(4,5)P2). Required for endocytosis and localization of actin. The polypeptide is Epsin-2 (ENT2) (Saccharomyces cerevisiae (strain ATCC 204508 / S288c) (Baker's yeast)).